A 222-amino-acid chain; its full sequence is 7-cyano-7-deazaguanine synthase (222 aa).

ATP is bound at residue 7-17 (LSGGMDSAVAT). The Zn(2+) site is built by C188, C196, C199, and C202.

This sequence belongs to the QueC family. Zn(2+) serves as cofactor.

It catalyses the reaction 7-carboxy-7-deazaguanine + NH4(+) + ATP = 7-cyano-7-deazaguanine + ADP + phosphate + H2O + H(+). Its pathway is purine metabolism; 7-cyano-7-deazaguanine biosynthesis. Functionally, catalyzes the ATP-dependent conversion of 7-carboxy-7-deazaguanine (CDG) to 7-cyano-7-deazaguanine (preQ(0)). This is 7-cyano-7-deazaguanine synthase from Methanothermobacter thermautotrophicus (strain ATCC 29096 / DSM 1053 / JCM 10044 / NBRC 100330 / Delta H) (Methanobacterium thermoautotrophicum).